The primary structure comprises 65 residues: U12-theraphotoxin-Cg1a (65 aa).

Residues 1–21 form the signal peptide; sequence MKTSVLLFMLGLTFLFDGLAA. A propeptide spanning residues 22–29 is cleaved from the precursor; the sequence is INLQEGER. 3 cysteine pairs are disulfide-bonded: C31-C45, C38-C50, and C44-C57.

It belongs to the neurotoxin 10 (Hwtx-1) family. 31 (Jztx-15) subfamily. In terms of tissue distribution, expressed by the venom gland.

Its subcellular location is the secreted. In terms of biological role, probable ion channel inhibitor. In Chilobrachys guangxiensis (Chinese earth tiger tarantula), this protein is U12-theraphotoxin-Cg1a.